The chain runs to 234 residues: Phosphoribosylaminoimidazole-succinocarboxamide synthase (234 aa).

It belongs to the SAICAR synthetase family.

The enzyme catalyses 5-amino-1-(5-phospho-D-ribosyl)imidazole-4-carboxylate + L-aspartate + ATP = (2S)-2-[5-amino-1-(5-phospho-beta-D-ribosyl)imidazole-4-carboxamido]succinate + ADP + phosphate + 2 H(+). The protein operates within purine metabolism; IMP biosynthesis via de novo pathway; 5-amino-1-(5-phospho-D-ribosyl)imidazole-4-carboxamide from 5-amino-1-(5-phospho-D-ribosyl)imidazole-4-carboxylate: step 1/2. In Streptococcus uberis (strain ATCC BAA-854 / 0140J), this protein is Phosphoribosylaminoimidazole-succinocarboxamide synthase.